A 428-amino-acid chain; its full sequence is Enolase (428 aa).

Gln163 contributes to the (2R)-2-phosphoglycerate binding site. The Proton donor role is filled by Glu205. Asp242, Glu285, and Asp312 together coordinate Mg(2+). Residues Lys337, Arg366, Ser367, and Lys388 each contribute to the (2R)-2-phosphoglycerate site. Lys337 serves as the catalytic Proton acceptor.

This sequence belongs to the enolase family. It depends on Mg(2+) as a cofactor.

The protein localises to the cytoplasm. Its subcellular location is the secreted. The protein resides in the cell surface. It carries out the reaction (2R)-2-phosphoglycerate = phosphoenolpyruvate + H2O. It participates in carbohydrate degradation; glycolysis; pyruvate from D-glyceraldehyde 3-phosphate: step 4/5. In terms of biological role, catalyzes the reversible conversion of 2-phosphoglycerate (2-PG) into phosphoenolpyruvate (PEP). It is essential for the degradation of carbohydrates via glycolysis. This is Enolase from Polynucleobacter asymbioticus (strain DSM 18221 / CIP 109841 / QLW-P1DMWA-1) (Polynucleobacter necessarius subsp. asymbioticus).